We begin with the raw amino-acid sequence, 301 residues long: Probable 2-dehydro-3-deoxy-D-pentonate aldolase YjhH (301 aa).

Residues threonine 46 and tyrosine 109 each act as charge relay system in the active site. Catalysis depends on tyrosine 135, which acts as the Proton donor. Lysine 164 functions as the Schiff-base intermediate with substrate in the catalytic mechanism.

The protein belongs to the DapA family.

Its subcellular location is the cytoplasm. The catalysed reaction is 2-dehydro-3-deoxy-D-arabinonate = glycolaldehyde + pyruvate. Its function is as follows. Functions as a 2-dehydro-3-deoxy-D-pentonate aldolase. The protein is Probable 2-dehydro-3-deoxy-D-pentonate aldolase YjhH (yjhH) of Escherichia coli (strain K12).